Consider the following 205-residue polypeptide: Holliday junction resolvase RecU (205 aa).

The interval 1–22 (MAINYPAGTRRRTAQAKNTMRT) is disordered. Mg(2+)-binding residues include threonine 90, aspartate 92, aspartate 105, and glutamine 124.

It belongs to the RecU family. It depends on Mg(2+) as a cofactor.

It localises to the cytoplasm. The catalysed reaction is Endonucleolytic cleavage at a junction such as a reciprocal single-stranded crossover between two homologous DNA duplexes (Holliday junction).. Functionally, endonuclease that resolves Holliday junction intermediates in genetic recombination. Cleaves mobile four-strand junctions by introducing symmetrical nicks in paired strands. Promotes annealing of linear ssDNA with homologous dsDNA. Required for DNA repair, homologous recombination and chromosome segregation. The chain is Holliday junction resolvase RecU from Leuconostoc citreum (strain KM20).